We begin with the raw amino-acid sequence, 408 residues long: UV excision repair protein RAD23 homolog B (408 aa).

Positions 1 to 79 (MLVTLKTLQQ…VVVMVTKPKA (79 aa)) constitute a Ubiquitin-like domain. Low complexity predominate over residues 80–111 (VTTPAPATTQQSNSAATTTVSSSTAPAVTQAP). The disordered stretch occupies residues 80 to 176 (VTTPAPATTQ…TSGDSSRSNL (97 aa)). A compositionally biased stretch (pro residues) spans 112-122 (APAPASAPTPT). The segment covering 123–143 (PVSVTPAPTTASSEPAPASAA) has biased composition (low complexity). Positions 144–153 (KQEKPAERPV) are enriched in basic and acidic residues. A compositionally biased stretch (low complexity) spans 154–174 (ETPVATTPTSTDSTSGDSSRS). Phosphothreonine occurs at positions 155 and 164. At Ser174 the chain carries Phosphoserine. Thr186 is subject to Phosphothreonine. The region spanning 188 to 228 (QSYENMVTEIMSMGYEREQVIAALRASFNNPDRAVEYLLMG) is the UBA 1 domain. Ser199 carries the post-translational modification Phosphoserine. A Phosphotyrosine modification is found at Tyr202. Positions 236 to 274 (QAVVDPPPAASTGAPQSSVAAAAATTTATTTTTSSGGHP) are disordered. Low complexity predominate over residues 255 to 268 (AAAAATTTATTTTT). An STI1 domain is found at 273 to 316 (HPLEFLRNQPQFQQMRQIIQQNPSLLPALLQQIGRENPQLLQQI). The region spanning 363–403 (PQEKEAIERLKALGFPEGLVIQAYFACEKNENLAANFLLQQ) is the UBA 2 domain.

It belongs to the RAD23 family. Component of the XPC complex composed of XPC, RAD23B and CETN2. Interacts with NGLY1 and PSMC1. Interacts with ATXN3. Interacts with PSMD4 and PSMC5. Interacts with AMFR. Interacts with VCP; the interaction is indirect and mediated by NGLY1.

It localises to the nucleus. The protein resides in the cytoplasm. Its function is as follows. Multiubiquitin chain receptor involved in modulation of proteasomal degradation. Binds to polyubiquitin chains. Proposed to be capable to bind simultaneously to the 26S proteasome and to polyubiquitinated substrates and to deliver ubiquitinated proteins to the proteasome. May play a role in endoplasmic reticulum-associated degradation (ERAD) of misfolded glycoproteins by association with PNGase and delivering deglycosylated proteins to the proteasome. Functionally, involved in global genome nucleotide excision repair (GG-NER) by acting as component of the XPC complex. Cooperatively with CETN2 appears to stabilize XPC. May protect XPC from proteasomal degradation. The XPC complex is proposed to represent the first factor bound at the sites of DNA damage and together with other core recognition factors, XPA, RPA and the TFIIH complex, is part of the pre-incision (or initial recognition) complex. The XPC complex recognizes a wide spectrum of damaged DNA characterized by distortions of the DNA helix such as single-stranded loops, mismatched bubbles or single-stranded overhangs. The orientation of XPC complex binding appears to be crucial for inducing a productive NER. XPC complex is proposed to recognize and to interact with unpaired bases on the undamaged DNA strand which is followed by recruitment of the TFIIH complex and subsequent scanning for lesions in the opposite strand in a 5'-to-3' direction by the NER machinery. Cyclobutane pyrimidine dimers (CPDs) which are formed upon UV-induced DNA damage esacpe detection by the XPC complex due to a low degree of structural perurbation. Instead they are detected by the UV-DDB complex which in turn recruits and cooperates with the XPC complex in the respective DNA repair. In vitro, the XPC:RAD23B dimer is sufficient to initiate NER; it preferentially binds to cisplatin and UV-damaged double-stranded DNA and also binds to a variety of chemically and structurally diverse DNA adducts. XPC:RAD23B contacts DNA both 5' and 3' of a cisplatin lesion with a preference for the 5' side. XPC:RAD23B induces a bend in DNA upon binding. XPC:RAD23B stimulates the activity of DNA glycosylases TDG and SMUG1. In Bos taurus (Bovine), this protein is UV excision repair protein RAD23 homolog B (RAD23B).